The chain runs to 539 residues: Protein mushroom body miniature (539 aa).

Polar residues predominate over residues 1 to 11 (MHNSGGQSGWN). The interval 1-345 (MHNSGGQSGW…EDDKKARKQK (345 aa)) is disordered. A compositionally biased stretch (basic and acidic residues) spans 67–79 (KFRDPQQELDNHQ). Positions 80–89 (PNKRGGRRNR) are enriched in basic residues. Over residues 90-101 (GGGGGGGGWGGR) the composition is skewed to gly residues. The segment covering 199–208 (IKKEKEMEHK) has biased composition (basic and acidic residues). Residues 268 to 289 (VASTPKPKAVKPVSSSDSSTSD) are compositionally biased toward low complexity. 2 positions are modified to phosphoserine: S288 and S290. 2 positions are modified to phosphothreonine: T292 and T327. Residues 327–336 (TDEEESTEPE) show a composition bias toward acidic residues. S332 is subject to Phosphoserine. T333 is modified (phosphothreonine). CCHC-type zinc fingers lie at residues 354 to 367 (CGIC…SFQC) and 371 to 386 (CRNC…NCPN). Residues 421–513 (VTAPVSAKPK…AASLPPQVFP (93 aa)) are disordered. Residues 428-447 (KPKKDKKASIKKIKKSSQKR) show a composition bias toward basic residues. Residues 456 to 480 (DEEDDEEDDDEDEDDSSESDDSESS) show a composition bias toward acidic residues.

Post-translationally, may be phosphorylated in vivo by CkIIalpha. mbm and CkIIalpha colocalize to the nucleolus and mbm is phosphorylated in vitro by CkIIalpha. In terms of tissue distribution, shows widespread expression in third instar larval brain with no apparent difference between males and females (at protein level). Detected at low levels in the mushroom body neuropil and is also expressed in many cells of the brain outside the mushroom body (at protein level). Not detected in third instar larval brain cells in anaphase (at protein level).

It localises to the nucleus. It is found in the nucleolus. The protein localises to the cytoplasm. In terms of biological role, required for small ribosomal subunit biogenesis in neuroblasts. Plays a role in mushroom body development. In Drosophila melanogaster (Fruit fly), this protein is Protein mushroom body miniature.